The primary structure comprises 150 residues: Ribosomal RNA large subunit methyltransferase H (150 aa).

Residues Ile-71, Ala-100, and 118–123 contribute to the S-adenosyl-L-methionine site; that span reads LSEMTF.

The protein belongs to the RNA methyltransferase RlmH family. Homodimer.

The protein localises to the cytoplasm. The catalysed reaction is pseudouridine(1915) in 23S rRNA + S-adenosyl-L-methionine = N(3)-methylpseudouridine(1915) in 23S rRNA + S-adenosyl-L-homocysteine + H(+). In terms of biological role, specifically methylates the pseudouridine at position 1915 (m3Psi1915) in 23S rRNA. The chain is Ribosomal RNA large subunit methyltransferase H from Helicobacter acinonychis (strain Sheeba).